The sequence spans 145 residues: MTYWICITNRENWEVIKRHNVWGVPKKHKNTLSRVKPGDKLVIYVRQEKDKEGNLLEPKIVGIYEVTSEPYVDFSRIFKPHRGGKETYPYRVKIKPIKIGEINFKPLINDLKFIKNKKRWSMHFFGKAMRELPEEDYKLIEKLLL.

This sequence belongs to the UPF0310 family.

The protein is UPF0310 protein PH1033 of Pyrococcus horikoshii (strain ATCC 700860 / DSM 12428 / JCM 9974 / NBRC 100139 / OT-3).